The following is a 242-amino-acid chain: Aspartate/glutamate leucyltransferase (242 aa).

The protein belongs to the R-transferase family. Bpt subfamily.

Its subcellular location is the cytoplasm. It carries out the reaction N-terminal L-glutamyl-[protein] + L-leucyl-tRNA(Leu) = N-terminal L-leucyl-L-glutamyl-[protein] + tRNA(Leu) + H(+). It catalyses the reaction N-terminal L-aspartyl-[protein] + L-leucyl-tRNA(Leu) = N-terminal L-leucyl-L-aspartyl-[protein] + tRNA(Leu) + H(+). Functions in the N-end rule pathway of protein degradation where it conjugates Leu from its aminoacyl-tRNA to the N-termini of proteins containing an N-terminal aspartate or glutamate. In Chromobacterium violaceum (strain ATCC 12472 / DSM 30191 / JCM 1249 / CCUG 213 / NBRC 12614 / NCIMB 9131 / NCTC 9757 / MK), this protein is Aspartate/glutamate leucyltransferase.